A 239-amino-acid chain; its full sequence is Ribose-5-phosphate isomerase A (239 aa).

Substrate contacts are provided by residues 34-37, 94-97, and 107-110; these read TGST, DGAD, and KGGG. The active-site Proton acceptor is Glu116. Lys134 is a substrate binding site.

Belongs to the ribose 5-phosphate isomerase family. Homodimer.

It catalyses the reaction aldehydo-D-ribose 5-phosphate = D-ribulose 5-phosphate. The protein operates within carbohydrate degradation; pentose phosphate pathway; D-ribose 5-phosphate from D-ribulose 5-phosphate (non-oxidative stage): step 1/1. Functionally, catalyzes the reversible conversion of ribose-5-phosphate to ribulose 5-phosphate. This Treponema denticola (strain ATCC 35405 / DSM 14222 / CIP 103919 / JCM 8153 / KCTC 15104) protein is Ribose-5-phosphate isomerase A.